We begin with the raw amino-acid sequence, 1172 residues long: Thrombospondin-2 (1172 aa).

A signal peptide spans 1 to 18 (MLWALALLALGIGPRASA). The Laminin G-like domain maps to 19 to 215 (GDHVKDTSFD…LQNVHLVFAD (197 aa)). Positions 19–232 (GDHVKDTSFD…KKGCQHSQGA (214 aa)) are heparin-binding. Residues N151, N316, and N330 are each glycosylated (N-linked (GlcNAc...) asparagine). Residues 318–375 (SACVQEGRIFAENETWVVDSCTTCTCKKFKTVCHQITCSPATCANPSFVEGECCPSCS) enclose the VWFC domain. TSP type-1 domains follow at residues 381-431 (DEGW…GKCD), 437-492 (NGGW…DPCP), and 494-549 (DGRW…RSCP). Cystine bridges form between C393–C425, C397–C430, C408–C415, C449–C486, C453–C491, C464–C476, C506–C543, C510–C548, C521–C533, C553–C564, C558–C574, C577–C588, C594–C610, C601–C619, C622–C646, C652–C665, C659–C678, C680–C691, C707–C715, C720–C740, C756–C776, C779–C799, C815–C835, C838–C858, C876–C896, C912–C932, and C948–C1169. The N-linked (GlcNAc...) asparagine glycan is linked to N457. Residues 549 to 589 (PIDGCLSNPCFPGAKCNSFPDGSWSCGSCPVGFLGNGTHCE) form the EGF-like 1 domain. An N-linked (GlcNAc...) asparagine glycan is attached at N584. The 45-residue stretch at 648 to 692 (PENPCKDKTHSCHKNAECIYLGHFSDPMYKCECQIGYAGDGLICG) folds into the EGF-like 2 domain. TSP type-3 repeat units follow at residues 693 to 728 (EDSDLDGWPNNNLVCATNATYHCIKDNCPKLPNSGQ), 729 to 764 (EDFDKDGIGDACDEDDDNDGVSDEKDNCQLLFNPRQ), 765 to 787 (LDYDKDEVGDRCDNCPYVHNPAQ), 788 to 823 (IDTDNNGEGDACSVDIDGDDVFNERDNCPYVYNTDQ), 824 to 846 (RDTDGDGVGDHCDNCPLMHNPDQ), 847 to 884 (IDQDNDLVGDQCDNNEDIDDDGHQNNQDNCPYISNSNQ), 885 to 920 (ADHDNDGKGDACDSDDDNDGVPDDRDNCRLVFNPDQ), and 921 to 956 (EDSDGDGRGDICKDDFDNDNVPDIDDVCPENNAITE). Residue N710 is glycosylated (N-linked (GlcNAc...) asparagine). Residues 727 to 752 (GQEDFDKDGIGDACDEDDDNDGVSDE) are disordered. Residues 739–749 (ACDEDDDNDGV) show a composition bias toward acidic residues. Positions 846-938 (QIDQDNDLVG…GDICKDDFDN (93 aa)) are disordered. Acidic residues predominate over residues 847–866 (IDQDNDLVGDQCDNNEDIDD). Positions 870-884 (QNNQDNCPYISNSNQ) are enriched in polar residues. The span at 885-895 (ADHDNDGKGDA) shows a compositional bias: basic and acidic residues. Acidic residues predominate over residues 896–905 (CDSDDDNDGV). The span at 925–935 (GDGRGDICKDD) shows a compositional bias: basic and acidic residues. Positions 928-930 (RGD) match the Cell attachment site motif. In terms of domain architecture, TSP C-terminal spans 960 to 1172 (RNFQMVPLDP…SDLKYECRDA (213 aa)). A glycan (N-linked (GlcNAc...) asparagine) is linked at N1069.

Belongs to the thrombospondin family. Homotrimer; disulfide-linked. Can bind to fibrinogen, fibronectin, laminin and type V collagen. Interacts (via the TSP type I repeats) with CD36; the interaction conveys an antiangiogenic effect. Interacts (via the TSP type I repeats) with HRG; the interaction blocks the antiangiogenic effect of THBS2 with CD36. Can bind to fibrinogen, fibronectin, laminin.

Its function is as follows. Adhesive glycoprotein that mediates cell-to-cell and cell-to-matrix interactions. Ligand for CD36 mediating antiangiogenic properties. The sequence is that of Thrombospondin-2 (Thbs2) from Mus musculus (Mouse).